The following is a 490-amino-acid chain: Betaine aldehyde dehydrogenase (490 aa).

Residues Ser26, Ile27, and Asp93 each coordinate K(+). 150 to 152 (GAW) serves as a coordination point for NAD(+). The active-site Charge relay system is Lys162. NAD(+) is bound at residue 176 to 179 (KPSE). Val180 provides a ligand contact to K(+). Residue 230–233 (GVAT) coordinates NAD(+). Residue Leu246 coordinates K(+). The active-site Proton acceptor is the Glu252. 3 residues coordinate NAD(+): Gly254, Cys286, and Glu387. The active-site Nucleophile is the Cys286. Cys286 bears the Cysteine sulfenic acid (-SOH) mark. Positions 457 and 460 each coordinate K(+). Glu464 acts as the Charge relay system in catalysis.

Belongs to the aldehyde dehydrogenase family. In terms of assembly, dimer of dimers. K(+) is required as a cofactor.

It catalyses the reaction betaine aldehyde + NAD(+) + H2O = glycine betaine + NADH + 2 H(+). The protein operates within amine and polyamine biosynthesis; betaine biosynthesis via choline pathway; betaine from betaine aldehyde: step 1/1. Functionally, involved in the biosynthesis of the osmoprotectant glycine betaine. Catalyzes the irreversible oxidation of betaine aldehyde to the corresponding acid. The protein is Betaine aldehyde dehydrogenase of Stutzerimonas stutzeri (strain A1501) (Pseudomonas stutzeri).